The primary structure comprises 807 residues: 85/88 kDa calcium-independent phospholipase A2 (807 aa).

Serine 13 is modified (phosphoserine). ANK repeat units follow at residues 120 to 147, 151 to 181, 185 to 215, 219 to 248, 251 to 281, 286 to 312, 316 to 345, 349 to 378, and 382 to 403; these read WTVTHLAVELGIRECFHHSRIISCANST, EGCTPLHLACRKGDSEILVELVQYCHAQMDV, KGETAFHYAVQGDNPQVLQLLGKNASAGLNQ, QGLTPLHLACQMGKQEMVRVLLLCNARCNI, PGGFPIHTAMKFSQKGCAEMIISMDSNQIHS, YGASPLHWAKNAEMARMLLKRGCDVDS, SGNTALHVAVTRNRFDCVMVLLTYGANAGA, HGNTPLHLAMSKDNMEMVKALIVFGAEVDT, and FGETPAFIASKISKLITRKALL. Helical transmembrane passes span 481-501 and 512-532; these read LLCLDGGGVKGLVIIQLLIAI and LFDWVAGTSTGGILALAILHS. In terms of domain architecture, PNPLA spans 482 to 666; sequence LCLDGGGVKG…LANNPTLDAM (185 aa). A GXGXXG motif is present at residues 486–491; that stretch reads GGGVKG. The GXSXG signature appears at 518 to 522; sequence GTSTG. Serine 520 functions as the Nucleophile in the catalytic mechanism. Residue aspartate 653 is the Proton acceptor of the active site. The short motif at 653–655 is the DGA/G element; that stretch reads DGG. The tract at residues 678 to 687 is calmodulin-binding (1-9-14 motif); it reads RKGQGNKVKK. Residues 749-760 are calmodulin-binding (IQ motif); the sequence is AWCEMVGIQYFR.

As to quaternary structure, homodimer formed by catalytic domains tightly interacting through a large hydrophobic interface. The contact area involves 3 alpha helices, several loops and a part of the beta sheet from each monomer. Both active sites of the dimer are in close proximity adopting an open conformation that provide sufficient space for phospholipid access and favoring cooperativity in deacylation-reacylation reactions. Each monomer has 9 ankyrin repeats stacked side-by-side in an elongated structure oriented outwards from the catalytic core. Expressed in pancreatic beta-cells. Expressed in skeletal muscle (at protein level).

It is found in the cytoplasm. It localises to the cell membrane. Its subcellular location is the mitochondrion. The protein resides in the cell projection. The protein localises to the pseudopodium. The enzyme catalyses a 1,2-diacyl-sn-glycero-3-phosphocholine + H2O = a 1-acyl-sn-glycero-3-phosphocholine + a fatty acid + H(+). It carries out the reaction a 1-O-alkyl-2-acyl-sn-glycero-3-phosphocholine + H2O = a 1-O-alkyl-sn-glycero-3-phosphocholine + a fatty acid + H(+). It catalyses the reaction 1,2-dihexadecanoyl-sn-glycero-3-phosphocholine + H2O = 1-hexadecanoyl-sn-glycero-3-phosphocholine + hexadecanoate + H(+). The catalysed reaction is 1-hexadecanoyl-2-(9Z-octadecenoyl)-sn-glycero-3-phosphocholine + H2O = 1-hexadecanoyl-sn-glycero-3-phosphocholine + (9Z)-octadecenoate + H(+). The enzyme catalyses 1-hexadecanoyl-2-(9Z,12Z-octadecadienoyl)-sn-glycero-3-phosphocholine + H2O = (9Z,12Z)-octadecadienoate + 1-hexadecanoyl-sn-glycero-3-phosphocholine + H(+). It carries out the reaction 1-hexadecanoyl-2-(5Z,8Z,11Z,14Z-eicosatetraenoyl)-sn-glycero-3-phosphocholine + H2O = 1-hexadecanoyl-sn-glycero-3-phosphocholine + (5Z,8Z,11Z,14Z)-eicosatetraenoate + H(+). It catalyses the reaction 1-octadecanoyl-2-(5Z,8Z,11Z,14Z-eicosatetraenoyl)-sn-glycero-3-phosphocholine + H2O = 1-octadecanoyl-sn-glycero-3-phosphocholine + (5Z,8Z,11Z,14Z)-eicosatetraenoate + H(+). The catalysed reaction is 1-hexadecanoyl-2-(5Z,8Z,11Z,14Z-eicosatetraenoyl)-sn-glycero-3-phosphoethanolamine + H2O = 1-hexadecanoyl-sn-glycero-3-phosphoethanolamine + (5Z,8Z,11Z,14Z)-eicosatetraenoate + H(+). The enzyme catalyses 1,2-dihexadecanoyl-sn-glycero-3-phosphate + H2O = 1-hexadecanoyl-sn-glycero-3-phosphate + hexadecanoate + H(+). It carries out the reaction a 1-acyl-sn-glycero-3-phosphocholine + H2O = sn-glycerol 3-phosphocholine + a fatty acid + H(+). It catalyses the reaction 1-hexadecanoyl-sn-glycero-3-phosphocholine + H2O = sn-glycerol 3-phosphocholine + hexadecanoate + H(+). The catalysed reaction is 1-(5Z,8Z,11Z,14Z-eicosatetraenoyl)-sn-glycero-3-phosphocholine + H2O = sn-glycerol 3-phosphocholine + (5Z,8Z,11Z,14Z)-eicosatetraenoate + H(+). The enzyme catalyses 2-(5Z,8Z,11Z,14Z)-eicosatetraenoyl-sn-glycero-3-phosphocholine + H2O = sn-glycerol 3-phosphocholine + (5Z,8Z,11Z,14Z)-eicosatetraenoate + H(+). It carries out the reaction 1-O-hexadecyl-2-(5Z,8Z,11Z,14Z)-eicosatetraenoyl-sn-glycero-3-phosphocholine + H2O = 1-O-hexadecyl-sn-glycero-3-phosphocholine + (5Z,8Z,11Z,14Z)-eicosatetraenoate + H(+). It catalyses the reaction 1-O-hexadecyl-2-acetyl-sn-glycero-3-phosphocholine + H2O = 1-O-hexadecyl-sn-glycero-3-phosphocholine + acetate + H(+). The catalysed reaction is hexadecanoyl-CoA + H2O = hexadecanoate + CoA + H(+). The enzyme catalyses 1',3'-bis[1,2-di-(9Z-octadecenoyl)-sn-glycero-3-phospho]-glycerol + H2O = 1'-[1,2-di-(9Z-octadecenoyl)-sn-glycero-3-phospho]-3'-[1-(9Z-octadecenoyl)-sn-glycero-3-phospho]-glycerol + (9Z)-octadecenoate + H(+). It carries out the reaction 1'-[1,2-di-(9Z-octadecenoyl)-sn-glycero-3-phospho]-3'-[1-(9Z-octadecenoyl)-sn-glycero-3-phospho]-glycerol + H2O = 1',3'-bis-[1-(9Z-octadecenoyl)-sn-glycero-3-phospho]-glycerol + (9Z)-octadecenoate + H(+). It catalyses the reaction 1',3'-bis-[1,2-di-(9Z,12Z-octadecadienoyl)-sn-glycero-3-phospho]-glycerol + H2O = 1'-[1,2-di-(9Z,12Z-octadecadienoyl)-sn-glycero-3-phospho]-3'-[1-(9Z,12Z-octadecadienoyl)-sn-glycero-3-phospho]-glycerol + (9Z,12Z)-octadecadienoate + H(+). The catalysed reaction is 1-octadecanoyl-2-(15-hydroxy-(5Z,8Z,11Z,13E)-eicosatetraenoyl)-sn-glycero-3-phosphoethanolamine + H2O = 1-octadecanoyl-sn-glycero-3-phosphoethanolamine + 15-hydroxy-(5Z,8Z,11Z,13E)-eicosatetraenoate + H(+). Activated by ATP. Inhibited by calcium-activated calmodulin. Inhibited by bromoenol lactone (BEL). Calcium-independent phospholipase involved in phospholipid remodeling with implications in cellular membrane homeostasis, mitochondrial integrity and signal transduction. Hydrolyzes the ester bond of the fatty acyl group attached at sn-1 or sn-2 position of phospholipids (phospholipase A1 and A2 activity respectively), producing lysophospholipids that are used in deacylation-reacylation cycles. Hydrolyzes both saturated and unsaturated long fatty acyl chains in various glycerophospholipid classes such as phosphatidylcholines, phosphatidylethanolamines and phosphatidates, with a preference for hydrolysis at sn-2 position. Can further hydrolyze lysophospholipids carrying saturated fatty acyl chains (lysophospholipase activity). Upon oxidative stress, contributes to remodeling of mitochondrial phospholipids in pancreatic beta cells, in a repair mechanism to reduce oxidized lipid content. Preferentially hydrolyzes oxidized polyunsaturated fatty acyl chains from cardiolipins, yielding monolysocardiolipins that can be reacylated with unoxidized fatty acyls to regenerate native cardiolipin species. Hydrolyzes oxidized glycerophosphoethanolamines present in pancreatic islets, releasing oxidized polyunsaturated fatty acids such as hydroxyeicosatetraenoates (HETEs). Has thioesterase activity toward fatty-acyl CoA releasing CoA-SH known to facilitate fatty acid transport and beta-oxidation in mitochondria particularly in skeletal muscle. Plays a role in regulation of membrane dynamics and homeostasis. Selectively hydrolyzes sn-2 arachidonoyl group in plasmalogen phospholipids, structural components of lipid rafts and myelin. Regulates F-actin polymerization at the pseudopods, which is required for both speed and directionality of MCP1/CCL2-induced monocyte chemotaxis. Targets membrane phospholipids to produce potent lipid signaling messengers. Generates lysophosphatidate (LPA, 1-acyl-glycerol-3-phosphate), which acts via G-protein receptors in various cell types. Has phospholipase A2 activity toward platelet-activating factor (PAF, 1-O-alkyl-2-acetyl-sn-glycero-3-phosphocholine), likely playing a role in inactivation of this potent pro-inflammatory signaling lipid. In response to glucose, amplifies calcium influx in pancreatic beta cells to promote INS secretion. This is 85/88 kDa calcium-independent phospholipase A2 (Pla2g6) from Rattus norvegicus (Rat).